A 451-amino-acid polypeptide reads, in one-letter code: Tubulin alpha-2 chain (451 aa).

Gln11 contributes to the GTP binding site. Residue Lys40 is modified to N6-acetyllysine. Positions 71, 144, 145, 179, 206, and 228 each coordinate GTP. Mg(2+) is bound at residue Glu71. Glu254 is a catalytic residue.

Belongs to the tubulin family. Dimer of alpha and beta chains. A typical microtubule is a hollow water-filled tube with an outer diameter of 25 nm and an inner diameter of 15 nM. Alpha-beta heterodimers associate head-to-tail to form protofilaments running lengthwise along the microtubule wall with the beta-tubulin subunit facing the microtubule plus end conferring a structural polarity. Microtubules usually have 13 protofilaments but different protofilament numbers can be found in some organisms and specialized cells. The cofactor is Mg(2+). Undergoes a tyrosination/detyrosination cycle, the cyclic removal and re-addition of a C-terminal tyrosine residue by the enzymes tubulin tyrosine carboxypeptidase (TTCP) and tubulin tyrosine ligase (TTL), respectively.

The protein localises to the cytoplasm. It is found in the cytoskeleton. The enzyme catalyses GTP + H2O = GDP + phosphate + H(+). Tubulin is the major constituent of microtubules, a cylinder consisting of laterally associated linear protofilaments composed of alpha- and beta-tubulin heterodimers. Microtubules grow by the addition of GTP-tubulin dimers to the microtubule end, where a stabilizing cap forms. Below the cap, tubulin dimers are in GDP-bound state, owing to GTPase activity of alpha-tubulin. This Chlamydomonas reinhardtii (Chlamydomonas smithii) protein is Tubulin alpha-2 chain (TUBA2).